The primary structure comprises 190 residues: Peptidyl-prolyl cis-trans isomerase A (190 aa).

The signal sequence occupies residues 1-24 (MLKSTLAAVAAVFALSALSPAALA). In terms of domain architecture, PPIase cyclophilin-type spans 27–188 (GDPHVLLTTS…KPVVILSAKV (162 aa)).

The protein belongs to the cyclophilin-type PPIase family.

The protein resides in the periplasm. It carries out the reaction [protein]-peptidylproline (omega=180) = [protein]-peptidylproline (omega=0). Its function is as follows. PPIases accelerate the folding of proteins. It catalyzes the cis-trans isomerization of proline imidic peptide bonds in oligopeptides. This is Peptidyl-prolyl cis-trans isomerase A (ppiA) from Salmonella typhimurium (strain LT2 / SGSC1412 / ATCC 700720).